Reading from the N-terminus, the 714-residue chain is Polyribonucleotide nucleotidyltransferase (714 aa).

Residues Asp-489 and Asp-495 each contribute to the Mg(2+) site. Residues 556–615 enclose the KH domain; it reads PKIDTIKIDVDKIKVVIGKGGETIDKIIAETGVKIDIDEEGNVSIYSSDQDAINRAKEII. Residues 625 to 693 enclose the S1 motif domain; that stretch reads GEVYHAKVVR…DKGRIDASMK (69 aa). Residues 691-714 form a disordered region; the sequence is SMKALVPRPPKPEKSEAKKEGKHD. Basic and acidic residues predominate over residues 700-714; it reads PKPEKSEAKKEGKHD.

It belongs to the polyribonucleotide nucleotidyltransferase family. The cofactor is Mg(2+).

The protein resides in the cytoplasm. The catalysed reaction is RNA(n+1) + phosphate = RNA(n) + a ribonucleoside 5'-diphosphate. Functionally, involved in mRNA degradation. Catalyzes the phosphorolysis of single-stranded polyribonucleotides processively in the 3'- to 5'-direction. The sequence is that of Polyribonucleotide nucleotidyltransferase from Streptococcus equi subsp. equi (strain 4047).